We begin with the raw amino-acid sequence, 636 residues long: 1-deoxy-D-xylulose-5-phosphate synthase (636 aa).

Residues His-72 and 113 to 115 each bind thiamine diphosphate; that span reads GHA. Mg(2+) is bound at residue Asp-144. Thiamine diphosphate is bound by residues 145 to 146, Asn-174, Tyr-287, and Glu-370; that span reads GA. Residue Asn-174 participates in Mg(2+) binding.

Belongs to the transketolase family. DXPS subfamily. Homodimer. The cofactor is Mg(2+). Requires thiamine diphosphate as cofactor.

The catalysed reaction is D-glyceraldehyde 3-phosphate + pyruvate + H(+) = 1-deoxy-D-xylulose 5-phosphate + CO2. It functions in the pathway metabolic intermediate biosynthesis; 1-deoxy-D-xylulose 5-phosphate biosynthesis; 1-deoxy-D-xylulose 5-phosphate from D-glyceraldehyde 3-phosphate and pyruvate: step 1/1. Its function is as follows. Catalyzes the acyloin condensation reaction between C atoms 2 and 3 of pyruvate and glyceraldehyde 3-phosphate to yield 1-deoxy-D-xylulose-5-phosphate (DXP). In Crocosphaera subtropica (strain ATCC 51142 / BH68) (Cyanothece sp. (strain ATCC 51142)), this protein is 1-deoxy-D-xylulose-5-phosphate synthase.